A 579-amino-acid polypeptide reads, in one-letter code: Putative ABC transporter ATP-binding protein VPA1482 (579 aa).

2 consecutive ABC transporter domains span residues 3–244 and 299–533; these read IEFS…GIRE and LEVR…ANLT. Residues 37–44 and 332–339 contribute to the ATP site; these read GPSGSGKS and GKNGSGKS.

Belongs to the ABC transporter superfamily.

It is found in the cell inner membrane. Functionally, probably part of an ABC transporter complex. Responsible for energy coupling to the transport system. The chain is Putative ABC transporter ATP-binding protein VPA1482 from Vibrio parahaemolyticus serotype O3:K6 (strain RIMD 2210633).